Reading from the N-terminus, the 159-residue chain is Putative 4-hydroxy-4-methyl-2-oxoglutarate aldolase (159 aa).

Residues 78–81 (GDVI) and R100 each bind substrate. Residue D101 coordinates a divalent metal cation.

Belongs to the class II aldolase/RraA-like family. Homotrimer. A divalent metal cation is required as a cofactor.

It catalyses the reaction 4-hydroxy-4-methyl-2-oxoglutarate = 2 pyruvate. The catalysed reaction is oxaloacetate + H(+) = pyruvate + CO2. Functionally, catalyzes the aldol cleavage of 4-hydroxy-4-methyl-2-oxoglutarate (HMG) into 2 molecules of pyruvate. Also contains a secondary oxaloacetate (OAA) decarboxylase activity due to the common pyruvate enolate transition state formed following C-C bond cleavage in the retro-aldol and decarboxylation reactions. This Mycobacterium sp. (strain JLS) protein is Putative 4-hydroxy-4-methyl-2-oxoglutarate aldolase.